A 179-amino-acid polypeptide reads, in one-letter code: MNVSHASVHPVEDPPAAATEVENPPRVRMDDMEGMPGTLLGLALRFFQFLFAAAALCVMASTSDFPSVTAFCYLVAATGLQSLWSLALAMVDVYAIMVKRSLQNRRLVSLFAIGDGVTSTLTFAAACASAGITVLIDNDLNSCAQNHCVQFETSTALAFISWFAALPSFLFNFWSLASR.

The disordered stretch occupies residues 1-24 (MNVSHASVHPVEDPPAAATEVENP). Residues 1 to 38 (MNVSHASVHPVEDPPAAATEVENPPRVRMDDMEGMPGT) lie on the Cytoplasmic side of the membrane. The helical transmembrane segment at 39–59 (LLGLALRFFQFLFAAAALCVM) threads the bilayer. Over 60-70 (ASTSDFPSVTA) the chain is Extracellular. A helical transmembrane segment spans residues 71–91 (FCYLVAATGLQSLWSLALAMV). Residues 92-115 (DVYAIMVKRSLQNRRLVSLFAIGD) are Cytoplasmic-facing. The helical transmembrane segment at 116-136 (GVTSTLTFAAACASAGITVLI) threads the bilayer. Topologically, residues 137-155 (DNDLNSCAQNHCVQFETST) are extracellular. Residues 156–176 (ALAFISWFAALPSFLFNFWSL) form a helical membrane-spanning segment. Topologically, residues 177-179 (ASR) are cytoplasmic.

Belongs to the Casparian strip membrane proteins (CASP) family. In terms of assembly, homodimer and heterodimers.

It is found in the cell membrane. The polypeptide is CASP-like protein 5A2 (Arabidopsis thaliana (Mouse-ear cress)).